A 317-amino-acid chain; its full sequence is Glucokinase (317 aa).

Belongs to the ROK (NagC/XylR) family. Homodimer. The cofactor is a divalent metal cation.

It carries out the reaction D-glucose + ATP = D-glucose 6-phosphate + ADP + H(+). Its function is as follows. Catalyzes the phosphorylation of D-glucose to D-glucose 6-phosphate using ATP as the phosphate donor. Can also phosphorylate 2-deoxyglucose, with lower efficiency. ITP can also serve as a phosphoryl donor. The protein is Glucokinase of Thermotoga maritima (strain ATCC 43589 / DSM 3109 / JCM 10099 / NBRC 100826 / MSB8).